Here is a 117-residue protein sequence, read N- to C-terminus: Modulator protein MzrA (117 aa).

Over 1-11 (MMTNRRFRKPS) the chain is Cytoplasmic. Residues 12–29 (AWRLLLLLLPLVVLLSMS) form a helical membrane-spanning segment. At 30–117 (SRRLPDEVML…SNGTSPVTRS (88 aa)) the chain is on the periplasmic side.

This sequence belongs to the MzrA family. Interacts with EnvZ.

It is found in the cell inner membrane. Functionally, modulates the activity of the EnvZ/OmpR two-component regulatory system, probably by directly modulating EnvZ enzymatic activity and increasing stability of phosphorylated OmpR. This is Modulator protein MzrA from Dickeya dadantii (strain 3937) (Erwinia chrysanthemi (strain 3937)).